A 224-amino-acid polypeptide reads, in one-letter code: Retinoschisin (224 aa).

A signal peptide spans 1–23; that stretch reads MPHKIEGFFLLLLFGYEATLGLS. Residues 63 to 219 enclose the F5/8 type C domain; sequence CPYHKPLGFE…IAIRMELLEC (157 aa). Disulfide bonds link C63–C219 and C110–C142.

Homooctamer of 4 homodimers; disulfide-linked. The homooctamer has a flat, cogwheel structure with a diameter of about 14 nm. Two stacked octamers can assemble to form a hexadecamer. Detected in the eye cup. Detected in retina, in the inner segment of the photoreceptors, the inner nuclear layer, the inner plexiform layer and the ganglion cell layer (at protein level). Restricted to the retina. At the mRNA level, detected only within the photoreceptor cell layer, most prominently within the inner segments of the photoreceptors. Undetectable in the inner plexiform layers and the inner nuclear layer.

Its subcellular location is the secreted. It is found in the cell membrane. Functionally, binds negatively charged membrane lipids, such as phosphatidylserine and phosphoinositides. May play a role in cell-cell adhesion processes in the retina, via homomeric interaction between octamers present on the surface of two neighboring cells. Required for normal structure and function of the retina. The chain is Retinoschisin (Rs1) from Mus musculus (Mouse).